We begin with the raw amino-acid sequence, 369 residues long: Alanine racemase (369 aa).

The Proton acceptor; specific for D-alanine role is filled by K35. At K35 the chain carries N6-(pyridoxal phosphate)lysine. Residue R130 coordinates substrate. Y257 functions as the Proton acceptor; specific for L-alanine in the catalytic mechanism. M305 serves as a coordination point for substrate.

Belongs to the alanine racemase family. Requires pyridoxal 5'-phosphate as cofactor.

It catalyses the reaction L-alanine = D-alanine. It functions in the pathway amino-acid biosynthesis; D-alanine biosynthesis; D-alanine from L-alanine: step 1/1. Catalyzes the interconversion of L-alanine and D-alanine. May also act on other amino acids. The polypeptide is Alanine racemase (alr) (Paracidovorax citrulli (strain AAC00-1) (Acidovorax citrulli)).